The chain runs to 406 residues: MSQPITRENFDEWMIPVYAPAPFIPVRGEGSRLWDQQGKEYIDFAGGIAVNALGHAHPELREALNEQASKFWHTGNGYTNEPVLRLAKKLIDATFADRVFFCNSGAEANEAALKLARKFAHDRYGSHKSGIVAFKNAFHGRTLFTVSAGGQPAYSQDFAPLPPDIRHAAYNDINSASALIDDATCAVIVEPIQGEGGVVPASNAFLQGLRELCDRHNALLIFDEVQTGVGRTGELYACMHYGVTPDLLTTAKALGGGFPVGALLATEECASVMTVGTHGTTYGGNPLASAVAGKVLDLINTPEMLNGVKQRHDWFVERLNSINHHYSLFSEVRGLGLLIGCVLNADYAGQAKQISQEAVKAGVMVLIAGGNVVRFAPALNVSEEEVTTGLDRFAAACEHFVSRGSS.

The residue at position 252 (Lys252) is an N6-(pyridoxal phosphate)lysine.

It belongs to the class-III pyridoxal-phosphate-dependent aminotransferase family. AstC subfamily. Pyridoxal 5'-phosphate serves as cofactor.

It carries out the reaction N(2)-succinyl-L-ornithine + 2-oxoglutarate = N-succinyl-L-glutamate 5-semialdehyde + L-glutamate. Its pathway is amino-acid degradation; L-arginine degradation via AST pathway; L-glutamate and succinate from L-arginine: step 3/5. Its function is as follows. Catalyzes the transamination of N(2)-succinylornithine and alpha-ketoglutarate into N(2)-succinylglutamate semialdehyde and glutamate. Can also act as an acetylornithine aminotransferase. In Escherichia coli O45:K1 (strain S88 / ExPEC), this protein is Succinylornithine transaminase.